The primary structure comprises 482 residues: Glutamyl-tRNA(Gln) amidotransferase subunit A (482 aa).

Residues lysine 81 and serine 156 each act as charge relay system in the active site. Catalysis depends on serine 180, which acts as the Acyl-ester intermediate.

The protein belongs to the amidase family. GatA subfamily. Heterotrimer of A, B and C subunits.

It catalyses the reaction L-glutamyl-tRNA(Gln) + L-glutamine + ATP + H2O = L-glutaminyl-tRNA(Gln) + L-glutamate + ADP + phosphate + H(+). Functionally, allows the formation of correctly charged Gln-tRNA(Gln) through the transamidation of misacylated Glu-tRNA(Gln) in organisms which lack glutaminyl-tRNA synthetase. The reaction takes place in the presence of glutamine and ATP through an activated gamma-phospho-Glu-tRNA(Gln). The sequence is that of Glutamyl-tRNA(Gln) amidotransferase subunit A from Brachyspira hyodysenteriae (strain ATCC 49526 / WA1).